A 199-amino-acid chain; its full sequence is Cytochrome c oxidase subunit 2 (199 aa).

A helical membrane pass occupies residues 1–13 (AICSLVLYLLSLM). The Mitochondrial matrix segment spans residues 14-26 (LMEKLSSNTVDAQ). The helical transmembrane segment at 27–54 (EVELIWTILPAIVLILLALPSLQILYMM) threads the bilayer. Topologically, residues 55 to 199 (DEIDEPDLTL…SSLLSSSSSL (145 aa)) are mitochondrial intermembrane. 6 residues coordinate Cu cation: His128, Cys163, Glu165, Cys167, His171, and Met174. Glu165 serves as a coordination point for Mg(2+).

It belongs to the cytochrome c oxidase subunit 2 family. In terms of assembly, component of the cytochrome c oxidase (complex IV, CIV), a multisubunit enzyme composed of 14 subunits. The complex is composed of a catalytic core of 3 subunits MT-CO1, MT-CO2 and MT-CO3, encoded in the mitochondrial DNA, and 11 supernumerary subunits COX4I, COX5A, COX5B, COX6A, COX6B, COX6C, COX7A, COX7B, COX7C, COX8 and NDUFA4, which are encoded in the nuclear genome. The complex exists as a monomer or a dimer and forms supercomplexes (SCs) in the inner mitochondrial membrane with NADH-ubiquinone oxidoreductase (complex I, CI) and ubiquinol-cytochrome c oxidoreductase (cytochrome b-c1 complex, complex III, CIII), resulting in different assemblies (supercomplex SCI(1)III(2)IV(1) and megacomplex MCI(2)III(2)IV(2)). Found in a complex with TMEM177, COA6, COX18, COX20, SCO1 and SCO2. Interacts with TMEM177 in a COX20-dependent manner. Interacts with COX20. Interacts with COX16. It depends on Cu cation as a cofactor.

The protein localises to the mitochondrion inner membrane. It catalyses the reaction 4 Fe(II)-[cytochrome c] + O2 + 8 H(+)(in) = 4 Fe(III)-[cytochrome c] + 2 H2O + 4 H(+)(out). Its function is as follows. Component of the cytochrome c oxidase, the last enzyme in the mitochondrial electron transport chain which drives oxidative phosphorylation. The respiratory chain contains 3 multisubunit complexes succinate dehydrogenase (complex II, CII), ubiquinol-cytochrome c oxidoreductase (cytochrome b-c1 complex, complex III, CIII) and cytochrome c oxidase (complex IV, CIV), that cooperate to transfer electrons derived from NADH and succinate to molecular oxygen, creating an electrochemical gradient over the inner membrane that drives transmembrane transport and the ATP synthase. Cytochrome c oxidase is the component of the respiratory chain that catalyzes the reduction of oxygen to water. Electrons originating from reduced cytochrome c in the intermembrane space (IMS) are transferred via the dinuclear copper A center (CU(A)) of subunit 2 and heme A of subunit 1 to the active site in subunit 1, a binuclear center (BNC) formed by heme A3 and copper B (CU(B)). The BNC reduces molecular oxygen to 2 water molecules using 4 electrons from cytochrome c in the IMS and 4 protons from the mitochondrial matrix. In Rhea americana (Greater rhea), this protein is Cytochrome c oxidase subunit 2 (MT-CO2).